Reading from the N-terminus, the 20-residue chain is Cytochrome c oxidase subunit 7B-heart, mitochondrial (20 aa).

This sequence belongs to the cytochrome c oxidase VIIb family. As to quaternary structure, component of the cytochrome c oxidase (complex IV, CIV), a multisubunit enzyme composed of 14 subunits. The complex is composed of a catalytic core of 3 subunits MT-CO1, MT-CO2 and MT-CO3, encoded in the mitochondrial DNA, and 11 supernumerary subunits COX4I, COX5A, COX5B, COX6A, COX6B, COX6C, COX7A, COX7B, COX7C, COX8 and NDUFA4, which are encoded in the nuclear genome. The complex exists as a monomer or a dimer and forms supercomplexes (SCs) in the inner mitochondrial membrane with NADH-ubiquinone oxidoreductase (complex I, CI) and ubiquinol-cytochrome c oxidoreductase (cytochrome b-c1 complex, complex III, CIII), resulting in different assemblies (supercomplex SCI(1)III(2)IV(1) and megacomplex MCI(2)III(2)IV(2)).

Its subcellular location is the mitochondrion inner membrane. The catalysed reaction is 4 Fe(II)-[cytochrome c] + O2 + 8 H(+)(in) = 4 Fe(III)-[cytochrome c] + 2 H2O + 4 H(+)(out). The protein operates within energy metabolism; oxidative phosphorylation. Its function is as follows. Component of the cytochrome c oxidase, the last enzyme in the mitochondrial electron transport chain which drives oxidative phosphorylation. The respiratory chain contains 3 multisubunit complexes succinate dehydrogenase (complex II, CII), ubiquinol-cytochrome c oxidoreductase (cytochrome b-c1 complex, complex III, CIII) and cytochrome c oxidase (complex IV, CIV), that cooperate to transfer electrons derived from NADH and succinate to molecular oxygen, creating an electrochemical gradient over the inner membrane that drives transmembrane transport and the ATP synthase. Cytochrome c oxidase is the component of the respiratory chain that catalyzes the reduction of oxygen to water. Electrons originating from reduced cytochrome c in the intermembrane space (IMS) are transferred via the dinuclear copper A center (CU(A)) of subunit 2 and heme A of subunit 1 to the active site in subunit 1, a binuclear center (BNC) formed by heme A3 and copper B (CU(B)). The BNC reduces molecular oxygen to 2 water molecules using 4 electrons from cytochrome c in the IMS and 4 protons from the mitochondrial matrix. In Thunnus obesus (Bigeye tuna), this protein is Cytochrome c oxidase subunit 7B-heart, mitochondrial.